Here is a 219-residue protein sequence, read N- to C-terminus: Glutathione S-transferase U19 (219 aa).

Residues 3 to 82 (NEVILLDFWP…YIDEVWSHKN (80 aa)) enclose the GST N-terminal domain. Glutathione-binding positions include 13-14 (SM), 39-40 (NK), 53-54 (KI), and 66-67 (ES). One can recognise a GST C-terminal domain in the interval 88-208 (DPYLRAQARF…LPDPEKVTEF (121 aa)). At Ser198 the chain carries Phosphoserine.

This sequence belongs to the GST superfamily. Tau family.

Its subcellular location is the cytoplasm. The protein resides in the cytosol. The catalysed reaction is RX + glutathione = an S-substituted glutathione + a halide anion + H(+). Functionally, catalyzes the glutathionylation of 12-oxophytodienoate (OPDA). In vitro, possesses glutathione S-transferase activity toward 1-chloro-2,4-dinitrobenzene (CDNB) and benzyl isothiocyanate (BITC), and glutathione peroxidase activity toward cumene hydroperoxide. In Arabidopsis thaliana (Mouse-ear cress), this protein is Glutathione S-transferase U19 (GSTU19).